The chain runs to 320 residues: o-succinylbenzoate synthase (320 aa).

Catalysis depends on K133, which acts as the Proton donor. 3 residues coordinate Mg(2+): D161, E190, and D213. K235 (proton acceptor) is an active-site residue.

The protein belongs to the mandelate racemase/muconate lactonizing enzyme family. MenC type 1 subfamily. A divalent metal cation serves as cofactor.

The catalysed reaction is (1R,6R)-6-hydroxy-2-succinyl-cyclohexa-2,4-diene-1-carboxylate = 2-succinylbenzoate + H2O. It functions in the pathway quinol/quinone metabolism; 1,4-dihydroxy-2-naphthoate biosynthesis; 1,4-dihydroxy-2-naphthoate from chorismate: step 4/7. It participates in quinol/quinone metabolism; menaquinone biosynthesis. Functionally, converts 2-succinyl-6-hydroxy-2,4-cyclohexadiene-1-carboxylate (SHCHC) to 2-succinylbenzoate (OSB). The sequence is that of o-succinylbenzoate synthase from Escherichia fergusonii (strain ATCC 35469 / DSM 13698 / CCUG 18766 / IAM 14443 / JCM 21226 / LMG 7866 / NBRC 102419 / NCTC 12128 / CDC 0568-73).